The chain runs to 181 residues: UPF0398 protein lmo1889 (181 aa).

The protein belongs to the UPF0398 family.

In Listeria monocytogenes serovar 1/2a (strain ATCC BAA-679 / EGD-e), this protein is UPF0398 protein lmo1889.